The primary structure comprises 425 residues: MDLQLPRGTRDILPEEVSKWHFLESAFNKVCENYQYEEIRTPIFEHTELFERGVGDSTDIVSKEMYTFLDKGGRSLTLRPEGTASVVRAFVEHKLYGEVSQPIKMYYNEPMFRYERPQGGRQRQFTQMGIEALGSDDPSIDVEVISLAMEFFRKIGLTNIKLVINSLGDKESRLKHREALVAHFEPHIDEFCAECQVRLHKNPLRILDCKKDHDNPLIQSAPSILDFLNEESVAYFENVKKYLTALEIPFEIDPTMVRGLDYYNHTTFEIMSVEEGFGAKTTLCGGGRYHGLVKEFGGPDTPGIGFGIGVERILLALEKAEINIPETKPLEVYVITAQPEAELKAVTLVNKLRQNGISAEKDYLKRKLKAQLKDANRKKAIYTVILGEEELQTGNYQLKNMETGEQEAVSETTIIEKLTNTKEEK.

Belongs to the class-II aminoacyl-tRNA synthetase family. In terms of assembly, homodimer.

It localises to the cytoplasm. It carries out the reaction tRNA(His) + L-histidine + ATP = L-histidyl-tRNA(His) + AMP + diphosphate + H(+). This chain is Histidine--tRNA ligase, found in Listeria innocua serovar 6a (strain ATCC BAA-680 / CLIP 11262).